Here is a 444-residue protein sequence, read N- to C-terminus: Protein kinase C and casein kinase substrate in neurons protein 1 (444 aa).

2 positions are modified to phosphoserine: serine 2 and serine 79. Positions 13-283 (EETTDSFWEV…AIRGADAQDD (271 aa)) constitute an F-BAR domain. Residues 26 to 275 (KRTVKRIDDG…QVYRELEQAI (250 aa)) adopt a coiled-coil conformation. Threonine 184 is modified (phosphothreonine). The interval 313–384 (AAKKEKQPKK…NGGSNPFDED (72 aa)) is disordered. The span at 314-324 (AKKEKQPKKAE) shows a compositional bias: basic and acidic residues. The span at 336 to 358 (ESTSQAGDRGSVSSYDRGQTYAT) shows a compositional bias: polar residues. Phosphoserine occurs at positions 346, 348, 349, 361, and 365. In terms of domain architecture, SH3 spans 385-444 (AKGVRVRALYDYDGQEQDELSFKAGDELTKLGEEDEQGWCRGRLDSGQLGLYPANYVEVV). Phosphotyrosine is present on tyrosine 394. 2 positions are modified to phosphoserine: serine 405 and serine 430.

This sequence belongs to the PACSIN family. Homodimer. May form heterooligomers with other PACSINs. Interacts with MAPT. Interacts (via SH3 domain) with SYNJ1 and WASL. Interacts (via SH3 domain) with DNM1; the interaction is reduced by DNM1 phosphorylation. Interacts with DNM2 and DNM3. Interacts with both COBL and DBNL. Identified in a complex composed of COBL, PACSIN1 and WASL. Interacts with EHD1 and EHD3. Interacts with TRPV4. In terms of processing, phosphorylated by casein kinase 2 (CK2) and protein kinase C (PKC).

The protein resides in the cytoplasm. Its subcellular location is the cell projection. It is found in the synapse. The protein localises to the synaptosome. It localises to the ruffle membrane. The protein resides in the membrane. Its subcellular location is the cytoplasmic vesicle membrane. It is found in the cytosol. The protein localises to the cell membrane. In terms of biological role, binds to membranes via its F-BAR domain and mediates membrane tubulation. Plays a role in the reorganization of the microtubule cytoskeleton via its interaction with MAPT; this decreases microtubule stability and inhibits MAPT-induced microtubule polymerization. Plays a role in cellular transport processes by recruiting DNM1, DNM2 and DNM3 to membranes. Plays a role in the reorganization of the actin cytoskeleton and in neuron morphogenesis via its interaction with COBL and WASL, and by recruiting COBL to the cell cortex. Plays a role in the regulation of neurite formation, neurite branching and the regulation of neurite length. Required for normal synaptic vesicle endocytosis; this process retrieves previously released neurotransmitters to accommodate multiple cycles of neurotransmission. Required for normal excitatory and inhibitory synaptic transmission. This chain is Protein kinase C and casein kinase substrate in neurons protein 1 (PACSIN1), found in Bos taurus (Bovine).